The following is a 176-amino-acid chain: Ferritin, middle subunit (176 aa).

One can recognise a Ferritin-like diiron domain in the interval 7-156 (QNYHRDCEAA…DFITNLSRMD (150 aa)). The Fe cation site is built by Glu-24, Glu-59, His-62, Glu-104, and Gln-138.

It belongs to the ferritin family. As to quaternary structure, in liver, forms a heteromer consisting of middle and heavy subunits. In spleen, forms a homomer. The functional molecule forms a roughly spherical shell with a diameter of 12 nm and contains a central cavity into which the insoluble mineral iron core is deposited. As to expression, liver and spleen (at protein level).

The catalysed reaction is 4 Fe(2+) + O2 + 4 H(+) = 4 Fe(3+) + 2 H2O. Functionally, stores iron in a soluble, non-toxic, readily available form. Important for iron homeostasis. Has ferroxidase activity. Iron is taken up in the ferrous form and deposited as ferric hydroxides after oxidation. This is Ferritin, middle subunit from Trematomus newnesi (Dusky notothen).